The sequence spans 294 residues: Oligopeptide transport system permease protein OppC (294 aa).

6 helical membrane-spanning segments follow: residues 27–47 (MIST…SMFL), 94–114 (IAFA…VITG), 127–147 (FTDF…VTII), 151–171 (NSWS…TRLI), 202–224 (IWPN…NIGL), and 260–280 (WTWV…IFIG). In terms of domain architecture, ABC transmembrane type-1 spans 88–280 (ARNSFNIAFA…IVVLAIIFIG (193 aa)).

This sequence belongs to the binding-protein-dependent transport system permease family. OppBC subfamily. In terms of assembly, the complex is composed of two ATP-binding proteins (OppD and OppF), two transmembrane proteins (OppB and OppC) and a solute-binding protein (OppA).

The protein localises to the cell membrane. In terms of biological role, part of the ABC transporter complex OppABCDF involved in the uptake of oligopeptides. Probably responsible for the translocation of the substrate across the membrane. This is Oligopeptide transport system permease protein OppC from Lactococcus lactis subsp. cremoris (strain SK11).